A 163-amino-acid polypeptide reads, in one-letter code: 16S rRNA aminocarboxypropyltransferase (163 aa).

Positions 18, 66, 87, and 106 each coordinate S-adenosyl-L-methionine.

It belongs to the TDD superfamily. TSR3 family.

The protein resides in the cytoplasm. The catalysed reaction is an N(1)-methylpseudouridine in rRNA + S-adenosyl-L-methionine = N(1)-methyl-N(3)-[(3S)-3-amino-3-carboxypropyl]pseudouridine in rRNA + S-methyl-5'-thioadenosine + H(+). In terms of biological role, aminocarboxypropyltransferase that catalyzes the aminocarboxypropyl transfer on pseudouridine corresponding to position 914 in M.jannaschii 16S rRNA. It constitutes the last step in biosynthesis of the hypermodified N1-methyl-N3-(3-amino-3-carboxypropyl) pseudouridine (m1acp3-Psi). This chain is 16S rRNA aminocarboxypropyltransferase, found in Thermoplasma acidophilum (strain ATCC 25905 / DSM 1728 / JCM 9062 / NBRC 15155 / AMRC-C165).